The sequence spans 380 residues: Kappa-type opioid receptor (380 aa).

The Extracellular portion of the chain corresponds to 1–57; sequence MGRRRQGPAQPASELPARNACLLPNGSAWLPGWAEPDGNGSAGPQDEQLEPAHISPA. N-linked (GlcNAc...) asparagine glycans are attached at residues N25 and N39. Residues 58–85 form a helical membrane-spanning segment; that stretch reads IPVIITAVYSVVFVVGLVGNSLVMFVII. At 86 to 95 the chain is on the cytoplasmic side; it reads RYTKMKTATN. A helical transmembrane segment spans residues 96–119; the sequence is IYIFNLALADALVTTTMPFQSTVY. The Extracellular portion of the chain corresponds to 120-132; the sequence is LMNSWPFGDVLCK. C131 and C210 are joined by a disulfide. A helical membrane pass occupies residues 133–154; sequence IVISIDYYNMFTSIFTLTMMSV. Residues 155 to 173 are Cytoplasmic-facing; the sequence is DRYIAVCHPVKALDFRTPL. A helical membrane pass occupies residues 174 to 196; the sequence is KAKIINICIWLLSSSVGISAIIL. The Extracellular portion of the chain corresponds to 197–222; it reads GGTKVREDVDIIECSLQFPDDDYSWW. The chain crosses the membrane as a helical span at residues 223–247; the sequence is DLFMKICVFVFAFVIPVLIIIVCYT. The Cytoplasmic portion of the chain corresponds to 248-274; sequence LMILRLKSVRLLSGSREKDRNLRRITR. The chain crosses the membrane as a helical span at residues 275-296; that stretch reads LVLVVVAVFIICWTPIHIFILV. Over 297–311 the chain is Extracellular; it reads EALGSTSHSTAALSS. The helical transmembrane segment at 312–333 threads the bilayer; sequence YYFCIALGYTNSSLNPILYAFL. Topologically, residues 334-380 are cytoplasmic; it reads DENFKRCFRDFCFPIKMRMERQSTSRVRNTVQDPAYMRNVDGVNKPV. C345 carries S-palmitoyl cysteine lipidation.

Belongs to the G-protein coupled receptor 1 family. As to quaternary structure, interacts with NHERF1. Interacts with GABARAPL1.

Its subcellular location is the cell membrane. Functionally, G-protein coupled opioid receptor that functions as a receptor for endogenous alpha-neoendorphins and dynorphins, but has low affinity for beta-endorphins. Also functions as a receptor for various synthetic opioids and for the psychoactive diterpene salvinorin A. Ligand binding causes a conformation change that triggers signaling via guanine nucleotide-binding proteins (G proteins) and modulates the activity of down-stream effectors, such as adenylate cyclase. Signaling leads to the inhibition of adenylate cyclase activity. Inhibits neurotransmitter release by reducing calcium ion currents and increasing potassium ion conductance. Plays a role in the perception of pain. Plays a role in mediating reduced physical activity upon treatment with synthetic opioids. Plays a role in the regulation of salivation in response to synthetic opioids. May play a role in arousal and regulation of autonomic and neuroendocrine functions. This Cavia porcellus (Guinea pig) protein is Kappa-type opioid receptor (OPRK1).